The primary structure comprises 454 residues: Bifunctional protein GlmU (454 aa).

Positions 1-227 (MKKLSVVILA…KMEVEGANNR (227 aa)) are pyrophosphorylase. Residues 9–12 (LAAG), K23, Q74, 79–80 (GT), 101–103 (YGD), G138, E152, N167, and N225 contribute to the UDP-N-acetyl-alpha-D-glucosamine site. D103 is a binding site for Mg(2+). N225 serves as a coordination point for Mg(2+). The linker stretch occupies residues 228-248 (LQLAALERYYQHKQAERLLLE). The segment at 249–454 (GVMLIDPARF…AGWQRPTKKK (206 aa)) is N-acetyltransferase. UDP-N-acetyl-alpha-D-glucosamine contacts are provided by R331 and K349. Residue H361 is the Proton acceptor of the active site. UDP-N-acetyl-alpha-D-glucosamine-binding residues include Y364 and N375. Acetyl-CoA is bound by residues A378, 384–385 (NY), S403, A421, and R438.

It in the N-terminal section; belongs to the N-acetylglucosamine-1-phosphate uridyltransferase family. The protein in the C-terminal section; belongs to the transferase hexapeptide repeat family. Homotrimer. The cofactor is Mg(2+).

The protein localises to the cytoplasm. The catalysed reaction is alpha-D-glucosamine 1-phosphate + acetyl-CoA = N-acetyl-alpha-D-glucosamine 1-phosphate + CoA + H(+). It carries out the reaction N-acetyl-alpha-D-glucosamine 1-phosphate + UTP + H(+) = UDP-N-acetyl-alpha-D-glucosamine + diphosphate. It participates in nucleotide-sugar biosynthesis; UDP-N-acetyl-alpha-D-glucosamine biosynthesis; N-acetyl-alpha-D-glucosamine 1-phosphate from alpha-D-glucosamine 6-phosphate (route II): step 2/2. Its pathway is nucleotide-sugar biosynthesis; UDP-N-acetyl-alpha-D-glucosamine biosynthesis; UDP-N-acetyl-alpha-D-glucosamine from N-acetyl-alpha-D-glucosamine 1-phosphate: step 1/1. It functions in the pathway bacterial outer membrane biogenesis; LPS lipid A biosynthesis. Functionally, catalyzes the last two sequential reactions in the de novo biosynthetic pathway for UDP-N-acetylglucosamine (UDP-GlcNAc). The C-terminal domain catalyzes the transfer of acetyl group from acetyl coenzyme A to glucosamine-1-phosphate (GlcN-1-P) to produce N-acetylglucosamine-1-phosphate (GlcNAc-1-P), which is converted into UDP-GlcNAc by the transfer of uridine 5-monophosphate (from uridine 5-triphosphate), a reaction catalyzed by the N-terminal domain. This chain is Bifunctional protein GlmU, found in Mannheimia succiniciproducens (strain KCTC 0769BP / MBEL55E).